A 70-amino-acid polypeptide reads, in one-letter code: Putative peptide YY-3 (70 aa).

An N-terminal signal peptide occupies residues 1 to 23 (MVSVCRPWPAVAIALLALLVCLG).

The protein belongs to the NPY family.

Its subcellular location is the secreted. The protein is Putative peptide YY-3 (PYY3) of Homo sapiens (Human).